Reading from the N-terminus, the 302-residue chain is Cell division protein FtsQ (302 aa).

Residues 1–43 lie on the Cytoplasmic side of the membrane; the sequence is MRPVDKKPVDRKIERETRYLRRDPAPSRWSYRYQRLMLTPAFR. The chain crosses the membrane as a helical span at residues 44 to 64; sequence AGVRLGTPVIIIALAVAVVFG. The Periplasmic portion of the chain corresponds to 65-302; the sequence is RADSRDWIMG…SMPGRSAGRG (238 aa). The 68-residue stretch at 89-156 folds into the POTRA domain; sequence FMVGSFAITG…GVLQIVIEER (68 aa).

It belongs to the FtsQ/DivIB family. FtsQ subfamily.

The protein localises to the cell inner membrane. Functionally, essential cell division protein. This chain is Cell division protein FtsQ, found in Ketogulonicigenium vulgare (strain Y25).